Reading from the N-terminus, the 157-residue chain is Ribonuclease H (157 aa).

Positions 4–146 (KRTEITIYTD…CDKLAVKASQ (143 aa)) constitute an RNase H type-1 domain. Residues Asp13, Glu51, Asp73, and Asp138 each contribute to the Mg(2+) site.

Belongs to the RNase H family. Monomer. Requires Mg(2+) as cofactor.

The protein resides in the cytoplasm. It catalyses the reaction Endonucleolytic cleavage to 5'-phosphomonoester.. Functionally, endonuclease that specifically degrades the RNA of RNA-DNA hybrids. This Trichodesmium erythraeum (strain IMS101) protein is Ribonuclease H.